The primary structure comprises 425 residues: GPI mannosyltransferase 1 (425 aa).

9 helical membrane passes run 11–31, 85–105, 144–164, 166–186, 233–253, 295–315, 340–360, 367–387, and 398–418; these read VIGA…WQDA, FFAF…WLIA, LLGV…VSLA, VILG…PAVV, IHLT…MYIL, FESL…PLVL, SQYF…SSLM, ILVG…GYNL, and GLFL…GIIV.

This sequence belongs to the PIGM family.

The protein localises to the endoplasmic reticulum membrane. It participates in glycolipid biosynthesis; glycosylphosphatidylinositol-anchor biosynthesis. Functionally, mannosyltransferase involved in glycosylphosphatidylinositol-anchor biosynthesis. Transfers the first alpha-1,4-mannose to GlcN-acyl-PI during GPI precursor assembly. Required for cell wall integrity. The sequence is that of GPI mannosyltransferase 1 (gpi14) from Aspergillus fumigatus (strain ATCC MYA-4609 / CBS 101355 / FGSC A1100 / Af293) (Neosartorya fumigata).